The following is a 133-amino-acid chain: MDTDVLDVDTARRRIVDLTDAVRAFCTAHDDGLCNVFVPHATAGVAIIETGAGSDEDLVDTLVRLLPRDDRYRHAHGSYGHGADHLLPAFVAPSVTVPVSGGQPLLGTWQSIVLVDLNQDNPRRSVRLSFVEG.

Belongs to the UPF0047 family.

This chain is UPF0047 protein Rv2556c, found in Mycobacterium tuberculosis (strain ATCC 25618 / H37Rv).